The sequence spans 483 residues: Glutamate--tRNA ligase (483 aa).

The short motif at 9 to 19 is the 'HIGH' region element; it reads PSPTGFLHIGN. Positions 253–257 match the 'KMSKS' region motif; it reads KLSKR. Lys-256 provides a ligand contact to ATP.

Belongs to the class-I aminoacyl-tRNA synthetase family. Glutamate--tRNA ligase type 1 subfamily. Monomer.

The protein resides in the cytoplasm. The enzyme catalyses tRNA(Glu) + L-glutamate + ATP = L-glutamyl-tRNA(Glu) + AMP + diphosphate. Its function is as follows. Catalyzes the attachment of glutamate to tRNA(Glu) in a two-step reaction: glutamate is first activated by ATP to form Glu-AMP and then transferred to the acceptor end of tRNA(Glu). This chain is Glutamate--tRNA ligase, found in Mycoplasma mycoides subsp. mycoides SC (strain CCUG 32753 / NCTC 10114 / PG1).